Consider the following 111-residue polypeptide: Small ribosomal subunit protein bS16 (111 aa).

Belongs to the bacterial ribosomal protein bS16 family.

The chain is Small ribosomal subunit protein bS16 from Rickettsia bellii (strain OSU 85-389).